Reading from the N-terminus, the 132-residue chain is ATP synthase epsilon chain, chloroplastic (132 aa).

The protein belongs to the ATPase epsilon chain family. F-type ATPases have 2 components, CF(1) - the catalytic core - and CF(0) - the membrane proton channel. CF(1) has five subunits: alpha(3), beta(3), gamma(1), delta(1), epsilon(1). CF(0) has three main subunits: a, b and c.

The protein resides in the plastid. Its subcellular location is the chloroplast thylakoid membrane. Its function is as follows. Produces ATP from ADP in the presence of a proton gradient across the membrane. In Calycanthus floridus var. glaucus (Eastern sweetshrub), this protein is ATP synthase epsilon chain, chloroplastic.